The following is an 835-amino-acid chain: MTEINFQEIDKKQQKIWEDNNLFVTPRLPINPKFYCLDMFPYPSGQGLHVGHPEGYTASDILVRYKKMKGFDVIHPMGWDAFGLPAENYAIATGVHPAITTKNNIDNFRRQIKSLGMAYDWTREIDTTDPNYYRWTQWIFLQIFKKGLAYESTVPINWCPSCKTGLANEEVFNGNCERCGTKIESKNIRQWVLKITEYADRLLEDLEGLDWPESTLAMQRNWIGKSIGAEVDFEIDGHKENLKVFTTRPDTLFGATYMVVSPEHPILEQITMPEQKAAVKSYQEEAAAKTDFERGDVNKKTGVFTGAYAINPVNGKKIQIWTSDYVLMGYGTGAIMAVPAHDERDYEFAKKFGLEIIEVIKSDKGVEKEAFTGDGELVNSDFLNGMKVEQSKAAMIKFLEEKGVGGAKTTYRLRDWVFSRQRYWGEPIPIVHCPKCGVVPVPESELPVKLPEVTNYEPTGTGESPLANVPEWVNTVCPVCAGPAKRETNTMPQWAGSCWYYLRYLDPKNDKTFVNPEIERECDPVDCYIGGAEHAVLHLLYSRFWHKVLYDLGYVKYKEPYAKLRHQGMILAYSYRGEDGVYHGYDEVDLSDLQNPKLKTTGEKLNSMVEKMSKSKKNVINPDDILHKYGADAFRMYEMFMGPFEASKPWDMKGIEGVNRFLKRVYAWGESVETDEVFLSTKELDILRSKTIVKVSEDIEKFNFNTAVSALMIYFNDLSKIKGVPLKHFKTFLALLHPFAPHITEELWSRRKCGPFLVKTAWPEADIMLLRSEDMGLGIQVNGKVRGSITVNASASDDEIKAKAFEEPNVKKHMEGKALVKVIIVPKRMVNIVVK.

Residues 41-52 carry the 'HIGH' region motif; it reads PYPSGQGLHVGH. The 'KMSKS' region signature appears at 611–615; it reads KMSKS. ATP is bound at residue Lys614.

Belongs to the class-I aminoacyl-tRNA synthetase family.

The protein resides in the cytoplasm. The catalysed reaction is tRNA(Leu) + L-leucine + ATP = L-leucyl-tRNA(Leu) + AMP + diphosphate. In Elusimicrobium minutum (strain Pei191), this protein is Leucine--tRNA ligase.